We begin with the raw amino-acid sequence, 208 residues long: Thymidylate kinase (208 aa).

12-19 provides a ligand contact to ATP; it reads GVDGAGKS.

Belongs to the thymidylate kinase family.

It catalyses the reaction dTMP + ATP = dTDP + ADP. Its function is as follows. Phosphorylation of dTMP to form dTDP in both de novo and salvage pathways of dTTP synthesis. The polypeptide is Thymidylate kinase (Bordetella bronchiseptica (strain ATCC BAA-588 / NCTC 13252 / RB50) (Alcaligenes bronchisepticus)).